We begin with the raw amino-acid sequence, 618 residues long: F-box/LRR-repeat protein At3g58940 (618 aa).

The 47-residue stretch at 1–47 (MDRVSNLPEEVRCHILSFLPTKHAALTSVLSKSWLNLWKFETNLDID) folds into the F-box domain. 6 LRR repeats span residues 147–176 (LKLRSEHCVNWWHWDIGASLPNLKSLNIDS), 196–223 (EVHMANMEWRELDETMSSASLTKLSIHG), 224–249 (TGVEEFEHPKSISIDTPNLLYLNYSD), 282–313 (TLYLTEDTLEVLTMCCESMPVFNNLKTLGLKS), 314–339 (DEGRGWQAVPALLRNCPHLEFLIIEG), and 354–379 (CISREDKGRSLISCPVKKLEVRGFRG). The tract at residues 587-618 (ATDSERAETSSNQEMTELGQATATYFPPREGE) is disordered. Residues 595–609 (TSSNQEMTELGQATA) show a composition bias toward polar residues.

This chain is F-box/LRR-repeat protein At3g58940, found in Arabidopsis thaliana (Mouse-ear cress).